Consider the following 416-residue polypeptide: Proline-serine-threonine phosphatase-interacting protein 1 (416 aa).

One can recognise an F-BAR domain in the interval 5–264 (LQFKDAFWCR…TLEGCSIDAD (260 aa)). A coiled-coil region spans residues 166–212 (HQKQVEKSQNKARQCKDSATEAERVYRQSIAQLEKVRAEWEQEHRTT). A Phosphoserine modification is found at Ser-318. Tyr-345 carries the phosphotyrosine modification. The region spanning 359 to 416 (SPAQEYRALYDYTAQNPDELDLSAGDILEVILEGEDGWWTVERNGQRGFVPGSYLEKL) is the SH3 domain.

As to quaternary structure, homodimer. Homotrimer. Interacts (via coiled-coil domain) with CD2AP, PTPN12 and PTPN18. Interacts (via SH3 domain) with ABL1 and WAS. Interacts (via SH3 and coiled-coil domains) with MEFV (via B-box zinc finger); the interaction allows binding of MEFV to PYCARD and facilitates formation of PYCARD pyroptosomes. Interacts with CD2, DNM2 and FASLG. Dephosphorylated on Tyr-345 by PTPN18, this event negatively regulates the association of PSTPIP1 with SH2 domain-containing proteins as tyrosine kinase. Phosphorylation of Tyr-345 is probably required for subsequent phosphorylation at other tyrosine residues. Phosphorylation is induced by activation of the EGFR and PDGFR in a ABL1 dependent manner. The phosphorylation regulates the interaction with WAS and with MEFV. In terms of tissue distribution, highly expressed in the peripheral blood leukocytes, granulocytes and monocytes, namely in T-cells and natural killer cells, and in spleen. Weakly expressed in the thymus, small intestine, lung and placenta.

The protein localises to the cytoplasm. It is found in the cell membrane. Its subcellular location is the cell projection. It localises to the uropodium. The protein resides in the cytoskeleton. The protein localises to the perinuclear region. It is found in the lamellipodium. Its subcellular location is the cleavage furrow. Functionally, involved in regulation of the actin cytoskeleton. May regulate WAS actin-bundling activity. Bridges the interaction between ABL1 and PTPN18 leading to ABL1 dephosphorylation. May play a role as a scaffold protein between PTPN12 and WAS and allow PTPN12 to dephosphorylate WAS. Has the potential to physically couple CD2 and CD2AP to WAS. Acts downstream of CD2 and CD2AP to recruit WAS to the T-cell:APC contact site so as to promote the actin polymerization required for synapse induction during T-cell activation. Down-regulates CD2-stimulated adhesion through the coupling of PTPN12 to CD2. Also has a role in innate immunity and the inflammatory response. Recruited to inflammasomes by MEFV. Induces formation of pyroptosomes, large supramolecular structures composed of oligomerized PYCARD dimers which form prior to inflammatory apoptosis. Binding to MEFV allows MEFV to bind to PYCARD and facilitates pyroptosome formation. Regulates endocytosis and cell migration in neutrophils. In Homo sapiens (Human), this protein is Proline-serine-threonine phosphatase-interacting protein 1 (PSTPIP1).